The following is a 394-amino-acid chain: Acetate kinase (394 aa).

Asn10 contributes to the Mg(2+) binding site. Lys17 contacts ATP. A substrate-binding site is contributed by Arg87. The Proton donor/acceptor role is filled by Asp144. ATP-binding positions include 204-208, 279-281, and 327-331; these read HLGNG, DMR, and GIGEN. Glu381 contributes to the Mg(2+) binding site.

It belongs to the acetokinase family. As to quaternary structure, homodimer. Requires Mg(2+) as cofactor. The cofactor is Mn(2+).

It localises to the cytoplasm. The enzyme catalyses acetate + ATP = acetyl phosphate + ADP. It functions in the pathway metabolic intermediate biosynthesis; acetyl-CoA biosynthesis; acetyl-CoA from acetate: step 1/2. Catalyzes the formation of acetyl phosphate from acetate and ATP. Can also catalyze the reverse reaction. The protein is Acetate kinase of Ectopseudomonas mendocina (strain ymp) (Pseudomonas mendocina).